A 611-amino-acid chain; its full sequence is Chaperone protein DnaK (611 aa).

A Phosphothreonine; by autocatalysis modification is found at T173. The span at 579–592 (AAGQAEGAQGAQDA) shows a compositional bias: low complexity. Residues 579–598 (AAGQAEGAQGAQDAGAKKDN) are disordered.

The protein belongs to the heat shock protein 70 family.

In terms of biological role, acts as a chaperone. In Bacillus cereus (strain B4264), this protein is Chaperone protein DnaK.